The sequence spans 209 residues: Large ribosomal subunit protein uL3 (209 aa).

Gln-150 carries the post-translational modification N5-methylglutamine.

It belongs to the universal ribosomal protein uL3 family. In terms of assembly, part of the 50S ribosomal subunit. Forms a cluster with proteins L14 and L19. Post-translationally, methylated by PrmB.

Functionally, one of the primary rRNA binding proteins, it binds directly near the 3'-end of the 23S rRNA, where it nucleates assembly of the 50S subunit. The chain is Large ribosomal subunit protein uL3 from Aliivibrio fischeri (strain MJ11) (Vibrio fischeri).